Reading from the N-terminus, the 437-residue chain is UDP-N-acetylmuramate--L-alanine ligase (437 aa).

108-114 (GAHGKTS) contacts ATP.

Belongs to the MurCDEF family.

It is found in the cytoplasm. The enzyme catalyses UDP-N-acetyl-alpha-D-muramate + L-alanine + ATP = UDP-N-acetyl-alpha-D-muramoyl-L-alanine + ADP + phosphate + H(+). It functions in the pathway cell wall biogenesis; peptidoglycan biosynthesis. Functionally, cell wall formation. In Staphylococcus aureus, this protein is UDP-N-acetylmuramate--L-alanine ligase.